The chain runs to 76 residues: NADH-ubiquinone oxidoreductase chain 4L (76 aa).

3 helical membrane passes run 1–21 (MTPV…GLAF), 29–49 (ALLC…LWAL), and 56–76 (YSVA…AGLA).

The protein belongs to the complex I subunit 4L family.

The protein resides in the mitochondrion membrane. The catalysed reaction is a ubiquinone + NADH + 5 H(+)(in) = a ubiquinol + NAD(+) + 4 H(+)(out). In terms of biological role, core subunit of the mitochondrial membrane respiratory chain NADH dehydrogenase (Complex I) which catalyzes electron transfer from NADH through the respiratory chain, using ubiquinone as an electron acceptor. Part of the enzyme membrane arm which is embedded in the lipid bilayer and involved in proton translocation. The chain is NADH-ubiquinone oxidoreductase chain 4L (MT-ND4L) from Oncorhynchus masou (Cherry salmon).